The primary structure comprises 570 residues: Phosphocholine hydrolase Lem3 (570 aa).

It localises to the secreted. The protein resides in the host cytoplasm. The catalysed reaction is [Rab1 protein]-O-phosphocholine-L-serine + H2O = [Rab1 protein]-L-serine + phosphocholine + H(+). Virulence effector that plays a role in hijacking the host vesicular trafficking by recruiting the small guanosine triphosphatase (GTPase) Rab1 to the cytosolic face of the Legionella-containing vacuole (LCVs). Acts as a phosphocholine hydrolase by mediating the hydrolysis of phosphocholine to Ser residues of host RAB1 (RAB1A, RAB1B or RAB1C). Dephosphocholination of target proteins restores accessibility to GTPase effector LepB. Can act on both GDP-bound and GTP-bound Rab proteins. The chain is Phosphocholine hydrolase Lem3 (lem3) from Legionella pneumophila subsp. pneumophila (strain Philadelphia 1 / ATCC 33152 / DSM 7513).